Consider the following 154-residue polypeptide: UPF0225 protein YE2246 (154 aa).

The protein belongs to the UPF0225 family.

The protein is UPF0225 protein YE2246 of Yersinia enterocolitica serotype O:8 / biotype 1B (strain NCTC 13174 / 8081).